Consider the following 211-residue polypeptide: Thiamine-phosphate synthase (211 aa).

Residues 40-42 (QLR) and Asn-72 each bind 4-amino-2-methyl-5-(diphosphooxymethyl)pyrimidine. Mg(2+)-binding residues include Asp-73 and Asp-92. Residue Ser-111 participates in 4-amino-2-methyl-5-(diphosphooxymethyl)pyrimidine binding. 136–138 (TST) is a 2-[(2R,5Z)-2-carboxy-4-methylthiazol-5(2H)-ylidene]ethyl phosphate binding site. Residue Lys-139 participates in 4-amino-2-methyl-5-(diphosphooxymethyl)pyrimidine binding. Residues Gly-167 and 187 to 188 (VS) contribute to the 2-[(2R,5Z)-2-carboxy-4-methylthiazol-5(2H)-ylidene]ethyl phosphate site.

It belongs to the thiamine-phosphate synthase family. It depends on Mg(2+) as a cofactor.

It catalyses the reaction 2-[(2R,5Z)-2-carboxy-4-methylthiazol-5(2H)-ylidene]ethyl phosphate + 4-amino-2-methyl-5-(diphosphooxymethyl)pyrimidine + 2 H(+) = thiamine phosphate + CO2 + diphosphate. It carries out the reaction 2-(2-carboxy-4-methylthiazol-5-yl)ethyl phosphate + 4-amino-2-methyl-5-(diphosphooxymethyl)pyrimidine + 2 H(+) = thiamine phosphate + CO2 + diphosphate. The enzyme catalyses 4-methyl-5-(2-phosphooxyethyl)-thiazole + 4-amino-2-methyl-5-(diphosphooxymethyl)pyrimidine + H(+) = thiamine phosphate + diphosphate. It functions in the pathway cofactor biosynthesis; thiamine diphosphate biosynthesis; thiamine phosphate from 4-amino-2-methyl-5-diphosphomethylpyrimidine and 4-methyl-5-(2-phosphoethyl)-thiazole: step 1/1. Functionally, condenses 4-methyl-5-(beta-hydroxyethyl)thiazole monophosphate (THZ-P) and 2-methyl-4-amino-5-hydroxymethyl pyrimidine pyrophosphate (HMP-PP) to form thiamine monophosphate (TMP). The sequence is that of Thiamine-phosphate synthase from Laribacter hongkongensis (strain HLHK9).